Consider the following 88-residue polypeptide: Small ribosomal subunit protein eS21 (88 aa).

It belongs to the eukaryotic ribosomal protein eS21 family. In terms of assembly, component of the small ribosomal subunit. Mature ribosomes consist of a small (40S) and a large (60S) subunit. The 40S subunit contains about 33 different proteins and 1 molecule of RNA (18S). The 60S subunit contains about 49 different proteins and 3 molecules of RNA (25S, 5.8S and 5S).

It is found in the cytoplasm. Required for the processing of the 20S rRNA-precursor to mature 18S rRNA in a late step of the maturation of 40S ribosomal subunits. Has a physiological role leading to 18S rRNA stability. This chain is Small ribosomal subunit protein eS21 (rps21), found in Aspergillus fumigatus (strain ATCC MYA-4609 / CBS 101355 / FGSC A1100 / Af293) (Neosartorya fumigata).